Here is a 463-residue protein sequence, read N- to C-terminus: Succinate--CoA ligase [ADP-forming] subunit beta, mitochondrial (463 aa).

The N-terminal 53 residues, 1 to 53, are a transit peptide targeting the mitochondrion; the sequence is MAASVFYGRLLAVATLRNHRPRTALGAAAQVLGSSGLFNNHGLQVQQQQQRNL. In terms of domain architecture, ATP-grasp spans 61–288; the sequence is MELLQEAGVS…SNSAYRQKKI (228 aa). N6-acetyllysine is present on lysine 78. Phosphotyrosine is present on tyrosine 84. Lysine 88 carries the N6-acetyllysine; alternate modification. Lysine 88 is modified (N6-succinyllysine; alternate). ATP contacts are provided by residues lysine 98 and 105–107; that span reads GRG. 4 positions are modified to N6-acetyllysine: lysine 129, lysine 139, lysine 143, and lysine 216. Residues asparagine 258 and aspartate 272 each contribute to the Mg(2+) site. Serine 279 carries the phosphoserine modification. Position 323 (asparagine 323) interacts with substrate. Threonine 341 is modified (phosphothreonine). Lysine 368 is subject to N6-acetyllysine. 380–382 is a substrate binding site; that stretch reads GIM.

The protein belongs to the succinate/malate CoA ligase beta subunit family. ATP-specific subunit beta subfamily. Heterodimer of an alpha and a beta subunit. The beta subunit determines specificity for ATP. Interacts with ALAS2. Mg(2+) serves as cofactor.

The protein resides in the mitochondrion. It catalyses the reaction succinate + ATP + CoA = succinyl-CoA + ADP + phosphate. Its pathway is carbohydrate metabolism; tricarboxylic acid cycle; succinate from succinyl-CoA (ligase route): step 1/1. ATP-specific succinyl-CoA synthetase functions in the citric acid cycle (TCA), coupling the hydrolysis of succinyl-CoA to the synthesis of ATP and thus represents the only step of substrate-level phosphorylation in the TCA. The beta subunit provides nucleotide specificity of the enzyme and binds the substrate succinate, while the binding sites for coenzyme A and phosphate are found in the alpha subunit. The protein is Succinate--CoA ligase [ADP-forming] subunit beta, mitochondrial of Macaca fascicularis (Crab-eating macaque).